The sequence spans 203 residues: 2-hydroxychromene-2-carboxylate isomerase (203 aa).

Ser-11 serves as the catalytic Nucleophile. Residue Ser-11 coordinates glutathione. Residues Lys-43, 53-54 (NR), and Tyr-84 contribute to the substrate site. Glutathione is bound by residues Val-168 and 179–182 (WGND).

This sequence belongs to the GST superfamily. NadH family. Glutathione is required as a cofactor.

It catalyses the reaction 2-hydroxychromene-2-carboxylate = (3E)-4-(2-hydroxyphenyl)-2-oxobut-3-enoate. Its pathway is aromatic compound metabolism; naphthalene degradation. In terms of biological role, involved in the naphthalene catabolic pathway. Catalyzes the reversible glutathione-dependent isomerization of 2-hydroxychromene-2-carboxylate (HCCA) to trans-O-hydroxybenzylidenepyruvate (THBPA). This Pseudomonas putida (Arthrobacter siderocapsulatus) protein is 2-hydroxychromene-2-carboxylate isomerase (nahD).